We begin with the raw amino-acid sequence, 205 residues long: Outer-membrane lipoprotein carrier protein (205 aa).

Positions 1 to 22 (MKKTTLKFAALTLLGLSNLALA) are cleaved as a signal peptide.

Belongs to the LolA family. Monomer.

The protein resides in the periplasm. Its function is as follows. Participates in the translocation of lipoproteins from the inner membrane to the outer membrane. Only forms a complex with a lipoprotein if the residue after the N-terminal Cys is not an aspartate (The Asp acts as a targeting signal to indicate that the lipoprotein should stay in the inner membrane). The polypeptide is Outer-membrane lipoprotein carrier protein (Haemophilus influenzae (strain PittEE)).